The sequence spans 384 residues: F-box/kelch-repeat protein At3g44120 (384 aa).

Residues 1–46 (MTLPELPKDLVEEILCFVPATSLKRLRSSCKEWNRLFKDDKRFARK) form the F-box domain. 3 Kelch repeats span residues 156–202 (CNKS…RECF), 264–314 (SVLV…FLLD), and 352–384 (GVQT…KRDY).

This Arabidopsis thaliana (Mouse-ear cress) protein is F-box/kelch-repeat protein At3g44120.